Reading from the N-terminus, the 108-residue chain is MSFSRRPKVTKSDIVNQISLNIKNSNEKLEKKYIRLVVDAFFEELKNSLCLNNVIEFRSFGTFELRKRKGRQNARNPQTGEYVNVDDHHVAYFRPGKDLKDGVWGIKG.

This sequence belongs to the bacterial histone-like protein family.

In terms of biological role, histone-like DNA-binding protein which is capable of wrapping DNA to stabilize it, and thus to prevent its denaturation under extreme environmental conditions. In Borrelia parkeri, this protein is DNA-binding protein HBbu (hbb).